The following is a 370-amino-acid chain: MLEFNNSTPLTMGVELELQIVNRRDYNLTRGSDDLLQIINKTEHGYDIKPEITESMIEIATAVHTDHVEMLAELTAMRTLLVTAANKLNLGLAGGGAHPFQHWEDQRIYPTDRYRLVSELYGYLAKQFTVYGQHIHIGCASGDDAIRLTHLLARQIPHFIALSASSPFYQGVDTSFQSSRLTSINAFPLSGTMPFVSDWEAFNTYFIKMSHLGIVASMKDFYWDIRPKPEYGTVEIRVCDTPLAIETAVALGAYAQTLSKYYFAHTELEPTQDTYLTYSYNRFQACRFGLNGALINPITGTQSSIKDDILQTFELLKDVAEELGTTDAIELLRQRVLSGQSDADWLRASYEKSGSLSDAVRQQSAVWMAT.

It belongs to the glutamate--cysteine ligase type 2 family. YbdK subfamily.

The enzyme catalyses L-cysteine + L-glutamate + ATP = gamma-L-glutamyl-L-cysteine + ADP + phosphate + H(+). Its function is as follows. ATP-dependent carboxylate-amine ligase which exhibits weak glutamate--cysteine ligase activity. The protein is Putative glutamate--cysteine ligase 2 of Herminiimonas arsenicoxydans.